The chain runs to 288 residues: Glycine--tRNA ligase alpha subunit (288 aa).

This sequence belongs to the class-II aminoacyl-tRNA synthetase family. As to quaternary structure, tetramer of two alpha and two beta subunits.

Its subcellular location is the cytoplasm. It carries out the reaction tRNA(Gly) + glycine + ATP = glycyl-tRNA(Gly) + AMP + diphosphate. The protein is Glycine--tRNA ligase alpha subunit of Desulfatibacillum aliphaticivorans.